The sequence spans 314 residues: Olfactory receptor 9A4 (314 aa).

At 1–24 the chain is on the extracellular side; that stretch reads MLMNYSSATEFYLLGFPGSEELHH. The N-linked (GlcNAc...) asparagine glycan is linked to asparagine 4. Residues 25-45 traverse the membrane as a helical segment; the sequence is ILFAIFFFFYLVTLMGNTVII. Over 46–53 the chain is Cytoplasmic; that stretch reads MIVCVDKR. Residues 54–74 traverse the membrane as a helical segment; the sequence is LQSPMYFFLGHLSALEILVTT. Residues 75–99 lie on the Extracellular side of the membrane; it reads IIVPVMLWGLLLPGMQTIYLSACVV. A disulfide bridge connects residues cysteine 97 and cysteine 189. Residues 100–120 form a helical membrane-spanning segment; that stretch reads QLFLYLAVGTTEFALLGAMAV. The Cytoplasmic segment spans residues 121–139; it reads DRYVAVCNPLRYNIIMNRH. Residues 140–160 form a helical membrane-spanning segment; it reads TCNFVVLVSWVFGFLFQIWPV. Residues 161 to 197 are Extracellular-facing; that stretch reads YVMFQLTYCKSNVVNNFFCDRGQLLKLSCNNTLFTEF. N-linked (GlcNAc...) asparagine glycosylation occurs at asparagine 190. The chain crosses the membrane as a helical span at residues 198 to 217; the sequence is ILFLMAVFVLFGSLIPTIVS. At 218 to 237 the chain is on the cytoplasmic side; it reads NAYIISTILKIPSSSGRRKS. The chain crosses the membrane as a helical span at residues 238-258; that stretch reads FSTCASHFTCVVIGYGSCLFL. Topologically, residues 259 to 271 are extracellular; the sequence is YVKPKQTQAADYN. Residues 272–292 traverse the membrane as a helical segment; it reads WVVSLMVSVVTPFLNPFIFTL. At 293 to 314 the chain is on the cytoplasmic side; that stretch reads RNDKVIEALRDGVKRCCQLFRN.

The protein belongs to the G-protein coupled receptor 1 family.

It localises to the cell membrane. Its function is as follows. Odorant receptor. The sequence is that of Olfactory receptor 9A4 (OR9A4) from Homo sapiens (Human).